The primary structure comprises 154 residues: 6,7-dimethyl-8-ribityllumazine synthase (154 aa).

5-amino-6-(D-ribitylamino)uracil contacts are provided by residues phenylalanine 22, 56–58 (AFE), and 80–82 (AVI). (2S)-2-hydroxy-3-oxobutyl phosphate is bound at residue 85–86 (AT). The active-site Proton donor is the histidine 88. Position 113 (phenylalanine 113) interacts with 5-amino-6-(D-ribitylamino)uracil. Residue arginine 127 coordinates (2S)-2-hydroxy-3-oxobutyl phosphate.

It belongs to the DMRL synthase family. In terms of assembly, forms an icosahedral capsid composed of 60 subunits, arranged as a dodecamer of pentamers.

It catalyses the reaction (2S)-2-hydroxy-3-oxobutyl phosphate + 5-amino-6-(D-ribitylamino)uracil = 6,7-dimethyl-8-(1-D-ribityl)lumazine + phosphate + 2 H2O + H(+). It functions in the pathway cofactor biosynthesis; riboflavin biosynthesis; riboflavin from 2-hydroxy-3-oxobutyl phosphate and 5-amino-6-(D-ribitylamino)uracil: step 1/2. Functionally, catalyzes the formation of 6,7-dimethyl-8-ribityllumazine by condensation of 5-amino-6-(D-ribitylamino)uracil with 3,4-dihydroxy-2-butanone 4-phosphate. This is the penultimate step in the biosynthesis of riboflavin. In Geobacillus thermodenitrificans (strain NG80-2), this protein is 6,7-dimethyl-8-ribityllumazine synthase.